Here is a 132-residue protein sequence, read N- to C-terminus: Riboflavin kinase (132 aa).

10–15 (GLGEGR) provides a ligand contact to CDP. Residues T39 and N41 each contribute to the Mg(2+) site. Residues T95, Y96, and E103 each coordinate FMN. 108 to 111 (MKLR) serves as a coordination point for CDP.

As to quaternary structure, monomer. Mg(2+) is required as a cofactor.

The catalysed reaction is riboflavin + CTP = CDP + FMN + H(+). Its pathway is cofactor biosynthesis; FMN biosynthesis; FMN from riboflavin (CTP route): step 1/1. In terms of biological role, catalyzes the CTP-dependent phosphorylation of riboflavin (vitamin B2) to form flavin mononucleotide (FMN). Can also utilize UTP as the phosphate donor, although less efficiently, and it is unclear if ATP and GTP can also serve as substrates or not. The polypeptide is Riboflavin kinase (ribK) (Methanocaldococcus jannaschii (strain ATCC 43067 / DSM 2661 / JAL-1 / JCM 10045 / NBRC 100440) (Methanococcus jannaschii)).